Consider the following 206-residue polypeptide: Large ribosomal subunit protein uL4 (206 aa).

The disordered stretch occupies residues 63 to 93; that stretch reads MYKQKGTGRARHHSARAPQFRGGGKAHGPVV. The span at 64–77 shows a compositional bias: basic residues; it reads YKQKGTGRARHHSA.

The protein belongs to the universal ribosomal protein uL4 family. In terms of assembly, part of the 50S ribosomal subunit.

In terms of biological role, one of the primary rRNA binding proteins, this protein initially binds near the 5'-end of the 23S rRNA. It is important during the early stages of 50S assembly. It makes multiple contacts with different domains of the 23S rRNA in the assembled 50S subunit and ribosome. Forms part of the polypeptide exit tunnel. This chain is Large ribosomal subunit protein uL4, found in Sinorhizobium fredii (strain NBRC 101917 / NGR234).